The primary structure comprises 377 residues: Floricaula/leafy homolog (377 aa).

Positions 116 to 126 (RRRLDEEDPRR) are enriched in basic and acidic residues. The segment at 116–190 (RRRLDEEDPR…RKKGQRKVVD (75 aa)) is disordered. Positions 131–141 (SGDNNTNTLDA) are enriched in polar residues. DNA-binding regions lie at residues 206–210 (REHPF), 275–282 (NKPKMRHY), and 346–349 (YVPT).

It belongs to the FLO/LFY family. In developing inflorescences, leaf primordia and very young leaves.

It localises to the nucleus. Probable transcription factor. In Populus trichocarpa (Western balsam poplar), this protein is Floricaula/leafy homolog (FL).